We begin with the raw amino-acid sequence, 125 residues long: Glutamyl-tRNA(Gln) amidotransferase subunit C, mitochondrial (125 aa).

It belongs to the GatC family. Subunit of the heterotrimeric GatCAB amidotransferase (AdT) complex, composed of A, B and C subunits.

It localises to the mitochondrion. It catalyses the reaction L-glutamyl-tRNA(Gln) + L-glutamine + ATP + H2O = L-glutaminyl-tRNA(Gln) + L-glutamate + ADP + phosphate + H(+). Its function is as follows. Allows the formation of correctly charged Gln-tRNA(Gln) through the transamidation of misacylated Glu-tRNA(Gln) in the mitochondria. The reaction takes place in the presence of glutamine and ATP through an activated gamma-phospho-Glu-tRNA(Gln). This is Glutamyl-tRNA(Gln) amidotransferase subunit C, mitochondrial from Drosophila mojavensis (Fruit fly).